The primary structure comprises 262 residues: Acyl-[acyl-carrier-protein]--UDP-N-acetylglucosamine O-acyltransferase (262 aa).

Belongs to the transferase hexapeptide repeat family. LpxA subfamily. In terms of assembly, homotrimer.

Its subcellular location is the cytoplasm. It catalyses the reaction a (3R)-hydroxyacyl-[ACP] + UDP-N-acetyl-alpha-D-glucosamine = a UDP-3-O-[(3R)-3-hydroxyacyl]-N-acetyl-alpha-D-glucosamine + holo-[ACP]. The protein operates within glycolipid biosynthesis; lipid IV(A) biosynthesis; lipid IV(A) from (3R)-3-hydroxytetradecanoyl-[acyl-carrier-protein] and UDP-N-acetyl-alpha-D-glucosamine: step 1/6. In terms of biological role, involved in the biosynthesis of lipid A, a phosphorylated glycolipid that anchors the lipopolysaccharide to the outer membrane of the cell. The chain is Acyl-[acyl-carrier-protein]--UDP-N-acetylglucosamine O-acyltransferase from Salmonella dublin (strain CT_02021853).